The sequence spans 91 residues: Large ribosomal subunit protein uL22 (91 aa).

The protein belongs to the universal ribosomal protein uL22 family. Part of the 50S ribosomal subunit.

Its function is as follows. This protein binds specifically to 23S rRNA; its binding is stimulated by other ribosomal proteins, e.g. L4, L17, and L20. It is important during the early stages of 50S assembly. It makes multiple contacts with different domains of the 23S rRNA in the assembled 50S subunit and ribosome. In terms of biological role, the globular domain of the protein is located near the polypeptide exit tunnel on the outside of the subunit, while an extended beta-hairpin is found that lines the wall of the exit tunnel in the center of the 70S ribosome. The chain is Large ribosomal subunit protein uL22 (rplV) from Loofah witches'-broom phytoplasma.